The following is an 851-amino-acid chain: Venom phosphodiesterase 1 (851 aa).

An N-terminal signal peptide occupies residues 1–23; the sequence is MIQQKVLFISLVAVTLGLGLGLG. 2 SMB domains span residues 30-73 and 74-118; these read PQVS…VLPT and QSWS…GETS. 16 disulfides stabilise this stretch: C34–C38, C34–C51, C38–C69, C49–C51, C49–C62, C55–C61, C62–C69, C78–C83, C78–C95, C83–C113, C93–C95, C93–C106, C99–C105, C106–C113, C124–C170, and C132–C344. The N-linked (GlcNAc...) asparagine glycan is linked to N39. The Cell attachment site signature appears at 58-60; the sequence is RQA. A divalent metal cation-binding residues include D147 and T185. Catalysis depends on T185, which acts as the AMP-threonine intermediate. Residues N216, N259, and N270 are each glycosylated (N-linked (GlcNAc...) asparagine). K271 serves as a coordination point for AMP. 4 residues coordinate a divalent metal cation: D305, H309, D352, and H353. An AMP-binding site is contributed by H309. Cystine bridges form between C360-C457, C408-C793, C541-C599, C554-C654, C556-C639, and C762-C772. N-linked (GlcNAc...) asparagine glycosylation is present at N405. H462 is a binding site for a divalent metal cation. N-linked (GlcNAc...) asparagine glycans are attached at residues N512, N594, N674, and N745.

Belongs to the nucleotide pyrophosphatase/phosphodiesterase family. In terms of assembly, monomer cleaved in two subunits; disulfide-linked. Is synthesized as a single-chain protein and is subsequently cleaved to form a two-subunit protein held together with disulfide bonds. Requires a divalent metal cation as cofactor. Expressed by venom gland.

Its subcellular location is the secreted. The catalysed reaction is ADP + H2O = AMP + phosphate + H(+). Hydrolyzes ADP with high activity. Shows weak or no activity on 5'-AMP, 5'-GMP, 3'-AMP, ATP, cAMP, and cGMP. Is devoid of monophosphatase and proteinase activities. Dose-dependently inhibits platelet aggregation induced by ADP and collagen. This chain is Venom phosphodiesterase 1, found in Crotalus adamanteus (Eastern diamondback rattlesnake).